The chain runs to 454 residues: uncharacterized protein (454 aa).

Residues 422–454 (EWLPPAHLDHGQPRTNSYFHPEKLLHDSDEDDP) form a disordered region.

The protein belongs to the Rv1128c/1148c/1588c/1702c/1945/3466 family.

This is an uncharacterized protein from Mycobacterium tuberculosis (strain CDC 1551 / Oshkosh).